Here is a 398-residue protein sequence, read N- to C-terminus: Glutamyl-tRNA reductase (398 aa).

Substrate contacts are provided by residues 45 to 48, Ser88, 93 to 95, and Gln99; these read TCNR and EDQ. Cys46 functions as the Nucleophile in the catalytic mechanism. Residue 168–173 participates in NADP(+) binding; sequence GAGKMG.

It belongs to the glutamyl-tRNA reductase family. Homodimer.

It carries out the reaction (S)-4-amino-5-oxopentanoate + tRNA(Glu) + NADP(+) = L-glutamyl-tRNA(Glu) + NADPH + H(+). It functions in the pathway porphyrin-containing compound metabolism; protoporphyrin-IX biosynthesis; 5-aminolevulinate from L-glutamyl-tRNA(Glu): step 1/2. Functionally, catalyzes the NADPH-dependent reduction of glutamyl-tRNA(Glu) to glutamate 1-semialdehyde (GSA). The protein is Glutamyl-tRNA reductase (hemA) of Methanothermobacter marburgensis (strain ATCC BAA-927 / DSM 2133 / JCM 14651 / NBRC 100331 / OCM 82 / Marburg) (Methanobacterium thermoautotrophicum).